A 120-amino-acid chain; its full sequence is Large ribosomal subunit protein bL20 (120 aa).

This sequence belongs to the bacterial ribosomal protein bL20 family.

Its function is as follows. Binds directly to 23S ribosomal RNA and is necessary for the in vitro assembly process of the 50S ribosomal subunit. It is not involved in the protein synthesizing functions of that subunit. The protein is Large ribosomal subunit protein bL20 of Blochmanniella pennsylvanica (strain BPEN).